The chain runs to 383 residues: Acetylornithine deacetylase (383 aa).

Zn(2+) is bound at residue histidine 80. Residue aspartate 82 is part of the active site. Aspartate 112 provides a ligand contact to Zn(2+). Glutamate 144 is an active-site residue. Zn(2+)-binding residues include glutamate 145, glutamate 169, and histidine 355.

It belongs to the peptidase M20A family. ArgE subfamily. In terms of assembly, homodimer. Requires Zn(2+) as cofactor. Co(2+) is required as a cofactor. The cofactor is glutathione.

It localises to the cytoplasm. The enzyme catalyses N(2)-acetyl-L-ornithine + H2O = L-ornithine + acetate. Its pathway is amino-acid biosynthesis; L-arginine biosynthesis; L-ornithine from N(2)-acetyl-L-ornithine (linear): step 1/1. Catalyzes the hydrolysis of the amide bond of N(2)-acetylated L-amino acids. Cleaves the acetyl group from N-acetyl-L-ornithine to form L-ornithine, an intermediate in L-arginine biosynthesis pathway, and a branchpoint in the synthesis of polyamines. This is Acetylornithine deacetylase from Escherichia coli O9:H4 (strain HS).